Consider the following 194-residue polypeptide: Thioredoxin peroxidase (194 aa).

Residues 2 to 160 (LQPNMPAPNF…ALRLLDAFIF (159 aa)) form the Thioredoxin domain. Cysteine 47 acts as the Cysteine sulfenic acid (-SOH) intermediate in catalysis.

It belongs to the peroxiredoxin family. AhpC/Prx1 subfamily. Homodimer; disulfide-linked, upon oxidation.

It catalyses the reaction a hydroperoxide + [thioredoxin]-dithiol = an alcohol + [thioredoxin]-disulfide + H2O. Its function is as follows. Antioxidant. Could be involved in protection against reactive oxygen species (ROS) generated by metabolic processes and/or protection of the parasite against ROS released by immune effector cells. Functionally, thiol-specific peroxidase that catalyzes the reduction of hydrogen peroxide and organic hydroperoxides to water and alcohols, respectively. Plays a role in cell protection against oxidative stress by detoxifying peroxides and as sensor of hydrogen peroxide-mediated signaling events. The polypeptide is Thioredoxin peroxidase (Fasciola hepatica (Liver fluke)).